The chain runs to 546 residues: Chaperonin GroEL 2 (546 aa).

Residues 30-33 (TLGP), K51, 87-91 (DGTTT), G415, 479-481 (NAA), and D495 contribute to the ATP site. Positions 524-546 (APKDAPPAQPAGVPGAGGTGFDF) are disordered. Residues 537 to 546 (PGAGGTGFDF) are compositionally biased toward gly residues.

The protein belongs to the chaperonin (HSP60) family. As to quaternary structure, forms a cylinder of 14 subunits composed of two heptameric rings stacked back-to-back. Interacts with the co-chaperonin GroES.

The protein localises to the cytoplasm. It carries out the reaction ATP + H2O + a folded polypeptide = ADP + phosphate + an unfolded polypeptide.. Functionally, together with its co-chaperonin GroES, plays an essential role in assisting protein folding. The GroEL-GroES system forms a nano-cage that allows encapsulation of the non-native substrate proteins and provides a physical environment optimized to promote and accelerate protein folding. This chain is Chaperonin GroEL 2, found in Burkholderia thailandensis (strain ATCC 700388 / DSM 13276 / CCUG 48851 / CIP 106301 / E264).